Consider the following 327-residue polypeptide: Aspartate carbamoyltransferase catalytic subunit (327 aa).

Carbamoyl phosphate-binding residues include Arg54 and Thr55. Lys82 is an L-aspartate binding site. 3 residues coordinate carbamoyl phosphate: Arg104, His134, and Gln137. Arg177 and Arg232 together coordinate L-aspartate. Gly280 and Pro281 together coordinate carbamoyl phosphate.

It belongs to the aspartate/ornithine carbamoyltransferase superfamily. ATCase family. As to quaternary structure, heterododecamer (2C3:3R2) of six catalytic PyrB chains organized as two trimers (C3), and six regulatory PyrI chains organized as three dimers (R2).

It carries out the reaction carbamoyl phosphate + L-aspartate = N-carbamoyl-L-aspartate + phosphate + H(+). The protein operates within pyrimidine metabolism; UMP biosynthesis via de novo pathway; (S)-dihydroorotate from bicarbonate: step 2/3. Its function is as follows. Catalyzes the condensation of carbamoyl phosphate and aspartate to form carbamoyl aspartate and inorganic phosphate, the committed step in the de novo pyrimidine nucleotide biosynthesis pathway. The sequence is that of Aspartate carbamoyltransferase catalytic subunit from Micrococcus luteus (strain ATCC 4698 / DSM 20030 / JCM 1464 / CCM 169 / CCUG 5858 / IAM 1056 / NBRC 3333 / NCIMB 9278 / NCTC 2665 / VKM Ac-2230) (Micrococcus lysodeikticus).